The chain runs to 278 residues: Juvenile hormone acid O-methyltransferase (278 aa).

The protein belongs to the methyltransferase superfamily. Specifically expressed in the corpora allata (CA).

It carries out the reaction (2E,6E)-farnesoate + S-adenosyl-L-methionine = methyl (2E,6E)-farnesoate + S-adenosyl-L-homocysteine. It catalyses the reaction juvenile hormone III carboxylate + S-adenosyl-L-methionine = juvenile hormone III + S-adenosyl-L-homocysteine. In terms of biological role, O-methyltransferase that transfers a methyl group from S-adenosyl-L-methionine (SAM) to the carboxyl group of juvenile hormone acids to produce active juvenile hormones in the corpora allata, the last step during juvenile hormone biosynthesis. Also able to methylate farnesoate to methyl farnesoate. This is Juvenile hormone acid O-methyltransferase from Bombyx mori (Silk moth).